Reading from the N-terminus, the 233-residue chain is Large ribosomal subunit protein uL1 (233 aa).

Belongs to the universal ribosomal protein uL1 family. As to quaternary structure, part of the 50S ribosomal subunit.

Functionally, binds directly to 23S rRNA. The L1 stalk is quite mobile in the ribosome, and is involved in E site tRNA release. In terms of biological role, protein L1 is also a translational repressor protein, it controls the translation of the L11 operon by binding to its mRNA. In Shewanella denitrificans (strain OS217 / ATCC BAA-1090 / DSM 15013), this protein is Large ribosomal subunit protein uL1.